The primary structure comprises 495 residues: Aspartyl/glutamyl-tRNA(Asn/Gln) amidotransferase subunit B (495 aa).

It belongs to the GatB/GatE family. GatB subfamily. Heterotrimer of A, B and C subunits.

It carries out the reaction L-glutamyl-tRNA(Gln) + L-glutamine + ATP + H2O = L-glutaminyl-tRNA(Gln) + L-glutamate + ADP + phosphate + H(+). The enzyme catalyses L-aspartyl-tRNA(Asn) + L-glutamine + ATP + H2O = L-asparaginyl-tRNA(Asn) + L-glutamate + ADP + phosphate + 2 H(+). Its function is as follows. Allows the formation of correctly charged Asn-tRNA(Asn) or Gln-tRNA(Gln) through the transamidation of misacylated Asp-tRNA(Asn) or Glu-tRNA(Gln) in organisms which lack either or both of asparaginyl-tRNA or glutaminyl-tRNA synthetases. The reaction takes place in the presence of glutamine and ATP through an activated phospho-Asp-tRNA(Asn) or phospho-Glu-tRNA(Gln). In Methanosarcina acetivorans (strain ATCC 35395 / DSM 2834 / JCM 12185 / C2A), this protein is Aspartyl/glutamyl-tRNA(Asn/Gln) amidotransferase subunit B.